Here is a 195-residue protein sequence, read N- to C-terminus: NADH-quinone oxidoreductase subunit I (195 aa).

2 4Fe-4S ferredoxin-type domains span residues 44 to 74 (LNRY…VEGA) and 90 to 119 (QVYQ…MTNE). [4Fe-4S] cluster-binding residues include Cys-54, Cys-57, Cys-60, Cys-64, Cys-99, Cys-102, Cys-105, and Cys-109. Positions 145 to 195 (MTAPPHALRPGTTQDDYYRGDITAVPEQAAPEQAAPEQPAPEREPNPETEK) are disordered. The segment covering 168–181 (AVPEQAAPEQAAPE) has biased composition (low complexity). The segment covering 184 to 195 (APEREPNPETEK) has biased composition (basic and acidic residues).

This sequence belongs to the complex I 23 kDa subunit family. As to quaternary structure, NDH-1 is composed of 14 different subunits. Subunits NuoA, H, J, K, L, M, N constitute the membrane sector of the complex. [4Fe-4S] cluster is required as a cofactor.

The protein resides in the cell membrane. It catalyses the reaction a quinone + NADH + 5 H(+)(in) = a quinol + NAD(+) + 4 H(+)(out). In terms of biological role, NDH-1 shuttles electrons from NADH, via FMN and iron-sulfur (Fe-S) centers, to quinones in the respiratory chain. The immediate electron acceptor for the enzyme in this species is believed to be ubiquinone. Couples the redox reaction to proton translocation (for every two electrons transferred, four hydrogen ions are translocated across the cytoplasmic membrane), and thus conserves the redox energy in a proton gradient. This is NADH-quinone oxidoreductase subunit I from Rhodococcus erythropolis (strain PR4 / NBRC 100887).